Here is a 335-residue protein sequence, read N- to C-terminus: Trans-3-hydroxy-L-proline dehydratase (335 aa).

Cys91 (proton acceptor) is an active-site residue. Substrate is bound by residues 92–93 (GH), Asp251, and 256–257 (GS).

It belongs to the proline racemase family.

The catalysed reaction is trans-3-hydroxy-L-proline = 1-pyrroline-2-carboxylate + H2O. Functionally, catalyzes the dehydration of trans-3-hydroxy-L-proline (t3LHyp) to Delta(1)-pyrroline-2-carboxylate (Pyr2C). Is likely involved in a degradation pathway that converts t3LHyp to L-proline. Displays neither trans-4-hydroxy-L-proline (t4LHyp) epimerase nor proline racemase activity. The sequence is that of Trans-3-hydroxy-L-proline dehydratase from Burkholderia ambifaria (strain ATCC BAA-244 / DSM 16087 / CCUG 44356 / LMG 19182 / AMMD) (Burkholderia cepacia (strain AMMD)).